A 185-amino-acid chain; its full sequence is Orotate phosphoribosyltransferase (185 aa).

5-phospho-alpha-D-ribose 1-diphosphate is bound by residues arginine 102, lysine 103, lysine 106, histidine 108, and 128 to 136 (DDVITTGGS). Residues threonine 132 and arginine 160 each coordinate orotate.

Belongs to the purine/pyrimidine phosphoribosyltransferase family. PyrE subfamily. In terms of assembly, homodimer. The cofactor is Mg(2+).

The catalysed reaction is orotidine 5'-phosphate + diphosphate = orotate + 5-phospho-alpha-D-ribose 1-diphosphate. It functions in the pathway pyrimidine metabolism; UMP biosynthesis via de novo pathway; UMP from orotate: step 1/2. Its function is as follows. Catalyzes the transfer of a ribosyl phosphate group from 5-phosphoribose 1-diphosphate to orotate, leading to the formation of orotidine monophosphate (OMP). The chain is Orotate phosphoribosyltransferase from Leptospira biflexa serovar Patoc (strain Patoc 1 / Ames).